Reading from the N-terminus, the 1709-residue chain is Hybrid signal transduction histidine kinase L (1709 aa).

Disordered stretches follow at residues 52–192 (SNNN…SPPH), 206–276 (FFSG…NSSD), 413–535 (TSNS…NNSC), and 554–615 (QQQQ…IFNN). Residues 53–87 (NNNNNNNNNNNNNNNNNNNNNNNNNNNNNNNNNNN) show a composition bias toward low complexity. Residues 88–100 (NEEKSNNETEKTL) are compositionally biased toward basic and acidic residues. The segment covering 106 to 148 (TTTTTTTNNNNNNNNNNNNNNNNNNNNNNNNNNNNNNNNNNTN) has biased composition (low complexity). The span at 149–170 (SSNDIYMNSPSSTLSSPGNAGN) shows a compositional bias: polar residues. Composition is skewed to low complexity over residues 413-466 (TSNS…TPNS), 486-535 (NNSP…NNSC), and 554-576 (QQQQ…PTTS). Positions 585–610 (LTINTSFKTSPMSSPKSFNKPSQSPQ) are enriched in polar residues. In terms of domain architecture, PAS spans 700–771 (ATRKMVTCIE…ATLTDKKTWN (72 aa)). Positions 770-822 (WNGFIRTRHNNNTLIYFEASISPVLDQFQQILYYNCTKRDVTQKRIDEESKTL) constitute a PAC domain. In terms of domain architecture, Histidine kinase spans 837-1059 (MMSHDIRTPM…TFTCILKFKK (223 aa)). A Phosphohistidine; by autocatalysis modification is found at H840. Disordered stretches follow at residues 1068 to 1112 (LLPA…HQQH) and 1137 to 1298 (QHQL…PTSP). Low complexity-rich tracts occupy residues 1075 to 1112 (LQQQ…HQQH), 1137 to 1153 (QHQL…LQQQ), and 1176 to 1194 (NQHI…QQQQ). Over residues 1204–1221 (HNSHGHNHHGSHHNHNHQ) the composition is skewed to basic residues. 2 stretches are compositionally biased toward polar residues: residues 1244–1257 (NEQQ…NSFS) and 1275–1298 (NISQ…PTSP). 2 consecutive Response regulatory domains span residues 1312–1492 (KMLF…MMYL) and 1570–1692 (KVLV…KKYG). A 4-aspartylphosphate modification is found at D1366. Low complexity-rich tracts occupy residues 1390–1412 (QHLQ…SELQ) and 1420–1440 (KNSS…SSGG). The disordered stretch occupies residues 1390–1440 (QHLQQQQEQEQQQQQEQQQSELQKQPDVENKNSSQNNDNNNNNNKSNSSGG). A 4-aspartylphosphate modification is found at D1622.

Activation probably requires transfer of a phosphate group between a histidine in the kinase core (transmitter) domain and an aspartate of the receiver domain.

It catalyses the reaction ATP + protein L-histidine = ADP + protein N-phospho-L-histidine.. Its function is as follows. Acts as a receptor histidine kinase for a signal transduction pathway. This protein undergoes an ATP-dependent autophosphorylation at a conserved histidine residue in the kinase core, and a phosphoryl group is then transferred to a conserved aspartate residue in the receiver domain. The protein is Hybrid signal transduction histidine kinase L (dhkL) of Dictyostelium discoideum (Social amoeba).